We begin with the raw amino-acid sequence, 265 residues long: Putative 2-aminoethylphosphonate transport system permease protein PhnV (265 aa).

The next 6 membrane-spanning stretches (helical) occupy residues 13-33 (GVVASVLFIVFFFLPLAVILM), 69-89 (LTIGFCASLFALLCGVWAALA), 104-124 (VFYLPSAIPSVSVGLGILVAF), 131-151 (MNGTLWIVLTAHFVLISAFTF), 185-205 (LPLLMPWMMSALALSLSLSMG), and 233-253 (NIADGAALTIVLVAITLLLMM). The 189-residue stretch at 65–253 (LLASLTIGFC…LVAITLLLMM (189 aa)) folds into the ABC transmembrane type-1 domain.

Belongs to the binding-protein-dependent transport system permease family.

Its subcellular location is the cell inner membrane. Functionally, probably part of the PhnSTUV complex (TC 3.A.1.11.5) involved in 2-aminoethylphosphonate import. Probably responsible for the translocation of the substrate across the membrane. The protein is Putative 2-aminoethylphosphonate transport system permease protein PhnV (phnV) of Salmonella choleraesuis (strain SC-B67).